Reading from the N-terminus, the 309-residue chain is Probable lipid kinase YegS-like (309 aa).

The 134-residue stretch at 1 to 134 (MAPSHWRVIL…VDLLRIDADH (134 aa)) folds into the DAGKc domain. Residues threonine 39, 65–71 (GDGTLSE), and threonine 96 contribute to the ATP site. Mg(2+) contacts are provided by leucine 219, aspartate 222, and leucine 224. Glutamate 280 serves as the catalytic Proton acceptor.

Belongs to the diacylglycerol/lipid kinase family. YegS lipid kinase subfamily. The cofactor is Mg(2+). Ca(2+) serves as cofactor.

It is found in the cytoplasm. Functionally, probably phosphorylates lipids; the in vivo substrate is unknown. The polypeptide is Probable lipid kinase YegS-like (Xanthomonas euvesicatoria pv. vesicatoria (strain 85-10) (Xanthomonas campestris pv. vesicatoria)).